Here is a 325-residue protein sequence, read N- to C-terminus: MKTLWKVLKIVFVSLAALVLLVSVSVFIYHHFQLNKEAALLKGKGTVVDVDGKKMNVYQEGSGKDTFVFMSGSGIAAPAYEMKGLYSKFSKENKIAVVDRAGYGYSEVSHDDRDIDTVLEQTRKALMKSGNKPPYILMPHSISGIEAMYWAQKYPKEIKAIIAMDIGLPQQYVTYKLSGVDRLKVRGFHLLTSIGFHRFIPSAVYNPEVIRQSFLTDEEKEIYKAINFKQFFNADMEHELLQSYQNGSKSVNLPAPKETPVLILDAVSDQNRHSKYAIQNRKDYEAFAAQFNTADIKELRGTHSIYLYQPDQIYKLSMEFMRKVR.

A helical transmembrane segment spans residues 10 to 30 (IVFVSLAALVLLVSVSVFIYH). An AB hydrolase-1 domain is found at 94-166 (KIAVVDRAGY…EIKAIIAMDI (73 aa)).

It is found in the cell membrane. This is an uncharacterized protein from Bacillus subtilis (strain 168).